We begin with the raw amino-acid sequence, 340 residues long: Ketol-acid reductoisomerase (NADP(+)) (340 aa).

Residues 1–183 (MAVTVYYDKD…GAGRTGIIET (183 aa)) form the KARI N-terminal Rossmann domain. NADP(+) is bound by residues 26–29 (FGSQ), K49, S54, and 84–87 (DELQ). Residue H109 is part of the active site. G135 is an NADP(+) binding site. Residues 184–329 (TFKDETETDL…EKLRAMMPWI (146 aa)) enclose the KARI C-terminal knotted domain. Residues D192, E196, E228, and E232 each contribute to the Mg(2+) site. Substrate is bound at residue S253.

This sequence belongs to the ketol-acid reductoisomerase family. Mg(2+) serves as cofactor.

The enzyme catalyses (2R)-2,3-dihydroxy-3-methylbutanoate + NADP(+) = (2S)-2-acetolactate + NADPH + H(+). It carries out the reaction (2R,3R)-2,3-dihydroxy-3-methylpentanoate + NADP(+) = (S)-2-ethyl-2-hydroxy-3-oxobutanoate + NADPH + H(+). It participates in amino-acid biosynthesis; L-isoleucine biosynthesis; L-isoleucine from 2-oxobutanoate: step 2/4. It functions in the pathway amino-acid biosynthesis; L-valine biosynthesis; L-valine from pyruvate: step 2/4. Involved in the biosynthesis of branched-chain amino acids (BCAA). Catalyzes an alkyl-migration followed by a ketol-acid reduction of (S)-2-acetolactate (S2AL) to yield (R)-2,3-dihydroxy-isovalerate. In the isomerase reaction, S2AL is rearranged via a Mg-dependent methyl migration to produce 3-hydroxy-3-methyl-2-ketobutyrate (HMKB). In the reductase reaction, this 2-ketoacid undergoes a metal-dependent reduction by NADPH to yield (R)-2,3-dihydroxy-isovalerate. This is Ketol-acid reductoisomerase (NADP(+)) from Campylobacter hominis (strain ATCC BAA-381 / DSM 21671 / CCUG 45161 / LMG 19568 / NCTC 13146 / CH001A).